Reading from the N-terminus, the 104-residue chain is ATP synthase subunit c (104 aa).

Transmembrane regions (helical) follow at residues Ser31 to Gly51 and Met75 to Ile95.

This sequence belongs to the ATPase C chain family. As to quaternary structure, F-type ATPases have 2 components, F(1) - the catalytic core - and F(0) - the membrane proton channel. F(1) has five subunits: alpha(3), beta(3), gamma(1), delta(1), epsilon(1). F(0) has three main subunits: a(1), b(2) and c(10-14). The alpha and beta chains form an alternating ring which encloses part of the gamma chain. F(1) is attached to F(0) by a central stalk formed by the gamma and epsilon chains, while a peripheral stalk is formed by the delta and b chains.

The protein resides in the cell inner membrane. Functionally, f(1)F(0) ATP synthase produces ATP from ADP in the presence of a proton or sodium gradient. F-type ATPases consist of two structural domains, F(1) containing the extramembraneous catalytic core and F(0) containing the membrane proton channel, linked together by a central stalk and a peripheral stalk. During catalysis, ATP synthesis in the catalytic domain of F(1) is coupled via a rotary mechanism of the central stalk subunits to proton translocation. Key component of the F(0) channel; it plays a direct role in translocation across the membrane. A homomeric c-ring of between 10-14 subunits forms the central stalk rotor element with the F(1) delta and epsilon subunits. In Aliarcobacter butzleri (strain RM4018) (Arcobacter butzleri), this protein is ATP synthase subunit c.